Reading from the N-terminus, the 94-residue chain is Large ribosomal subunit protein uL23 (94 aa).

The protein belongs to the universal ribosomal protein uL23 family. Part of the 50S ribosomal subunit. Contacts protein L29, and trigger factor when it is bound to the ribosome.

Functionally, one of the early assembly proteins it binds 23S rRNA. One of the proteins that surrounds the polypeptide exit tunnel on the outside of the ribosome. Forms the main docking site for trigger factor binding to the ribosome. The sequence is that of Large ribosomal subunit protein uL23 from Treponema pallidum (strain Nichols).